Reading from the N-terminus, the 254-residue chain is NH(3)-dependent NAD(+) synthetase (254 aa).

32–39 serves as a coordination point for ATP; the sequence is GISGGVDS. Mg(2+) is bound at residue Asp-38. Arg-113 contacts deamido-NAD(+). Thr-133 serves as a coordination point for ATP. Mg(2+) is bound at residue Glu-138. Lys-146 and Asp-153 together coordinate deamido-NAD(+). ATP is bound by residues Lys-162 and Ser-184. 244–245 contributes to the deamido-NAD(+) binding site; the sequence is HK.

It belongs to the NAD synthetase family. As to quaternary structure, homodimer.

The catalysed reaction is deamido-NAD(+) + NH4(+) + ATP = AMP + diphosphate + NAD(+) + H(+). It functions in the pathway cofactor biosynthesis; NAD(+) biosynthesis; NAD(+) from deamido-NAD(+) (ammonia route): step 1/1. Its function is as follows. Catalyzes the ATP-dependent amidation of deamido-NAD to form NAD. Uses ammonia as a nitrogen source. The protein is NH(3)-dependent NAD(+) synthetase of Thermococcus sibiricus (strain DSM 12597 / MM 739).